The sequence spans 331 residues: Ketol-acid reductoisomerase (NADP(+)) (331 aa).

A KARI N-terminal Rossmann domain is found at 2-182; it reads AKMYYDKDAD…GGTRAGVIET (181 aa). NADP(+) contacts are provided by residues 25–28, Ser51, Ser53, and 83–86; these read FGSQ and DEKQ. His108 is an active-site residue. Gly134 is an NADP(+) binding site. The KARI C-terminal knotted domain occupies 183–328; that stretch reads TFKEETETDL…KGLREMMAWI (146 aa). Asp191, Glu195, Glu227, and Glu231 together coordinate Mg(2+). Ser252 contacts substrate.

Belongs to the ketol-acid reductoisomerase family. Requires Mg(2+) as cofactor.

It carries out the reaction (2R)-2,3-dihydroxy-3-methylbutanoate + NADP(+) = (2S)-2-acetolactate + NADPH + H(+). The enzyme catalyses (2R,3R)-2,3-dihydroxy-3-methylpentanoate + NADP(+) = (S)-2-ethyl-2-hydroxy-3-oxobutanoate + NADPH + H(+). The protein operates within amino-acid biosynthesis; L-isoleucine biosynthesis; L-isoleucine from 2-oxobutanoate: step 2/4. It functions in the pathway amino-acid biosynthesis; L-valine biosynthesis; L-valine from pyruvate: step 2/4. Its function is as follows. Involved in the biosynthesis of branched-chain amino acids (BCAA). Catalyzes an alkyl-migration followed by a ketol-acid reduction of (S)-2-acetolactate (S2AL) to yield (R)-2,3-dihydroxy-isovalerate. In the isomerase reaction, S2AL is rearranged via a Mg-dependent methyl migration to produce 3-hydroxy-3-methyl-2-ketobutyrate (HMKB). In the reductase reaction, this 2-ketoacid undergoes a metal-dependent reduction by NADPH to yield (R)-2,3-dihydroxy-isovalerate. The polypeptide is Ketol-acid reductoisomerase (NADP(+)) (Thermoanaerobacter pseudethanolicus (strain ATCC 33223 / 39E) (Clostridium thermohydrosulfuricum)).